The following is an 837-amino-acid chain: Ubiquitin carboxyl-terminal hydrolase A (837 aa).

The segment at 166-277 (PSAFAESIIQ…QHLTHWGLNP (112 aa)) adopts a UBP-type; degenerate zinc-finger fold. The 517-residue stretch at 319-835 (TGIENLGNSC…LGYIYFYKRQ (517 aa)) folds into the USP domain. C328 (nucleophile) is an active-site residue. The 42-residue stretch at 628–669 (SFNQEVLDTLLSMDFPLVRCKKALLATGGKDAELAMNWIFEH) folds into the UBA 1 domain. A disordered region spans residues 676–695 (DIEQTPVNNNNNNNNSSNSN). The span at 683-695 (NNNNNNNNSSNSN) shows a compositional bias: low complexity. The UBA 2 domain maps to 700–740 (VFNSQDVDNIIGMGFTDSQAKLALKNTKGNLERAADWLFSH). The active-site Proton acceptor is H797.

This sequence belongs to the peptidase C19 family.

It catalyses the reaction Thiol-dependent hydrolysis of ester, thioester, amide, peptide and isopeptide bonds formed by the C-terminal Gly of ubiquitin (a 76-residue protein attached to proteins as an intracellular targeting signal).. In terms of biological role, required for development but not growth. The sequence is that of Ubiquitin carboxyl-terminal hydrolase A (ubpA) from Dictyostelium discoideum (Social amoeba).